A 316-amino-acid polypeptide reads, in one-letter code: tRNA dimethylallyltransferase (316 aa).

17-24 (GPTASGKT) is a binding site for ATP. Substrate is bound at residue 19–24 (TASGKT). Interaction with substrate tRNA stretches follow at residues 42 to 45 (DSAL), 166 to 170 (QRLSR), 247 to 252 (RCVGYR), and 280 to 287 (KRQITWLR).

This sequence belongs to the IPP transferase family. Monomer. Mg(2+) is required as a cofactor.

It carries out the reaction adenosine(37) in tRNA + dimethylallyl diphosphate = N(6)-dimethylallyladenosine(37) in tRNA + diphosphate. Catalyzes the transfer of a dimethylallyl group onto the adenine at position 37 in tRNAs that read codons beginning with uridine, leading to the formation of N6-(dimethylallyl)adenosine (i(6)A). The sequence is that of tRNA dimethylallyltransferase from Escherichia coli O81 (strain ED1a).